Consider the following 324-residue polypeptide: Protein translocase subunit SecF (324 aa).

The next 6 membrane-spanning stretches (helical) occupy residues 16–36 (FFWAAPVTFGFSVFLMAASLV), 145–165 (LIRSAILAVAAACAGIAVYIW), 174–194 (LGSVAALIHDVLVTIGVFALF), 201–221 (TTVAALLTVLGYSINDTVVVF), 247–269 (TLSRTIMTLMTTLIALVSLLVFG), and 276–295 (FVFAITFGVVIGTYSSVYMA).

Belongs to the SecD/SecF family. SecF subfamily. In terms of assembly, forms a complex with SecD. Part of the essential Sec protein translocation apparatus which comprises SecA, SecYEG and auxiliary proteins SecDF-YajC and YidC.

It is found in the cell inner membrane. Its function is as follows. Part of the Sec protein translocase complex. Interacts with the SecYEG preprotein conducting channel. SecDF uses the proton motive force (PMF) to complete protein translocation after the ATP-dependent function of SecA. This chain is Protein translocase subunit SecF, found in Cereibacter sphaeroides (strain ATCC 17023 / DSM 158 / JCM 6121 / CCUG 31486 / LMG 2827 / NBRC 12203 / NCIMB 8253 / ATH 2.4.1.) (Rhodobacter sphaeroides).